Consider the following 433-residue polypeptide: 3-phosphoshikimate 1-carboxyvinyltransferase (433 aa).

3-phosphoshikimate is bound by residues Lys-23, Ser-24, and Arg-28. Position 23 (Lys-23) interacts with phosphoenolpyruvate. Phosphoenolpyruvate contacts are provided by Gly-95 and Arg-123. Residues Ser-170, Ser-171, Gln-172, Ser-198, Asp-317, and Lys-344 each contribute to the 3-phosphoshikimate site. Gln-172 serves as a coordination point for phosphoenolpyruvate. Asp-317 serves as the catalytic Proton acceptor. The phosphoenolpyruvate site is built by Arg-348, Arg-391, and Lys-416.

Belongs to the EPSP synthase family. Monomer.

The protein localises to the cytoplasm. It catalyses the reaction 3-phosphoshikimate + phosphoenolpyruvate = 5-O-(1-carboxyvinyl)-3-phosphoshikimate + phosphate. The protein operates within metabolic intermediate biosynthesis; chorismate biosynthesis; chorismate from D-erythrose 4-phosphate and phosphoenolpyruvate: step 6/7. Catalyzes the transfer of the enolpyruvyl moiety of phosphoenolpyruvate (PEP) to the 5-hydroxyl of shikimate-3-phosphate (S3P) to produce enolpyruvyl shikimate-3-phosphate and inorganic phosphate. This is 3-phosphoshikimate 1-carboxyvinyltransferase from Neisseria gonorrhoeae (strain NCCP11945).